The primary structure comprises 1020 residues: Retinoblastoma-related protein (1020 aa).

Polar residues-rich tracts occupy residues 382–391 and 398–409; these read SPTKTITSPL and ASHTNGILGSTN. The interval 382–409 is disordered; the sequence is SPTKTITSPLSPHRSPASHTNGILGSTN. A domain A region spans residues 415–616; that stretch reads TPVSTAMTTA…EKGSSMYNSL (202 aa). Residues 415–869 are pocket; that stretch reads TPVSTAMTTA…NEIFIPAAKP (455 aa). The segment at 617-737 is spacer; it reads TVARPSLSAE…PGGGGETCAE (121 aa). The tract at residues 738–869 is domain B; sequence TGINIFFSKI…NEIFIPAAKP (132 aa).

The protein belongs to the retinoblastoma protein (RB) family.

Its subcellular location is the nucleus. Regulator of biological processes that recruits a histone deacetylase to control gene transcription. May play a role in the entry into mitosis, negatively regulating the cell proliferation. Formation of stable complexes with geminiviridae replication-associated proteins may create a cellular environment which favors viral DNA replication. The protein is Retinoblastoma-related protein (RBR) of Ricinus communis (Castor bean).